A 317-amino-acid polypeptide reads, in one-letter code: MTFDCRVCDQTLKRAQPPAASCMPLAEHEPMSPDSDAGCAGNPFTNLLALGKKDGAEKWHLSGSILDVYSDEQGISSANAGLTDAPCPSILPMRKEIAETDGRALAKERQKKDNHNLIERRRRYNINYRIKELGTLIPKSNDPDMRWNKGTILKASVDYIKWLQKEQQRARELEHRQKKLEHANRQLRLRIQELEIQARAHGLPILASLGTADVGTHITKQQTHPERNLGGCCLQLTPTQGTSPEFYEQAVAFSDPLSHFTDLSFSAALKEEQRLDGMLLSDTICPFGTDPLLSAISPAVSKASSRSSLSSEDGDEL.

A necessary for transcriptional transactivation region spans residues 1-90 (MTFDCRVCDQ…GLTDAPCPSI (90 aa)). The region spanning 110–163 (QKKDNHNLIERRRRYNINYRIKELGTLIPKSNDPDMRWNKGTILKASVDYIKWL) is the bHLH domain. The interval 242–317 (TSPEFYEQAV…SLSSEDGDEL (76 aa)) is necessary for transcriptional transactivation.

It belongs to the MiT/TFE family. In terms of assembly, homodimer. Forms heterodimers with MITF. Interacts with MITF. Forms heterodimers with TFE3. As to expression, expressed in osteoclast-like cells (at protein level). Expressed in cells of the mononuclear phagocyte lineage. Expressed in macrophages and in osteoclast-like cells.

It localises to the nucleus. Transcriptional regulator that acts as a repressor or an activator. Acts as a transcriptional transactivator on the proximal promoter region of the tartrate-resistant acid phosphatase (TRAP) E-box containing promoter. Collaborates with MITF in target gene activation. Acts as a transcriptional repressor on minimal promoter containing element F (that includes an E-box sequence). Binds to element F in an E-box sequence-specific manner. Acts as a transcriptional repressor on minimal promoter containing mu E3 enhancer sequence. Binds to mu E3 DNA sequence of the immunoglobulin heavy-chain gene enhancer. Binds DNA in a homo- or heterodimeric form. This Mus musculus (Mouse) protein is Transcription factor EC (Tfec).